A 146-amino-acid chain; its full sequence is Hemoglobin subunit beta (146 aa).

Val-1 carries the N-acetylvaline modification. Residues 2 to 146 (HLTAEEKDAV…VANALAHRYH (145 aa)) enclose the Globin domain. Ser-44 is modified (phosphoserine). Residue Lys-59 is modified to N6-acetyllysine. His-63 lines the heme b pocket. An N6-acetyllysine modification is found at Lys-82. His-92 serves as a coordination point for heme b. S-nitrosocysteine is present on Cys-93.

It belongs to the globin family. As to quaternary structure, heterotetramer of two alpha chains and two beta chains. In terms of tissue distribution, red blood cells.

Its function is as follows. Involved in oxygen transport from the lung to the various peripheral tissues. The chain is Hemoglobin subunit beta (HBB) from Hippopotamus amphibius (Hippopotamus).